We begin with the raw amino-acid sequence, 161 residues long: Transcription antitermination protein NusB (161 aa).

It belongs to the NusB family.

Involved in transcription antitermination. Required for transcription of ribosomal RNA (rRNA) genes. Binds specifically to the boxA antiterminator sequence of the ribosomal RNA (rrn) operons. The chain is Transcription antitermination protein NusB from Syntrophus aciditrophicus (strain SB).